The primary structure comprises 100 residues: Glutamyl-tRNA(Gln) amidotransferase subunit C (100 aa).

This sequence belongs to the GatC family. As to quaternary structure, heterotrimer of A, B and C subunits.

The catalysed reaction is L-glutamyl-tRNA(Gln) + L-glutamine + ATP + H2O = L-glutaminyl-tRNA(Gln) + L-glutamate + ADP + phosphate + H(+). The enzyme catalyses L-aspartyl-tRNA(Asn) + L-glutamine + ATP + H2O = L-asparaginyl-tRNA(Asn) + L-glutamate + ADP + phosphate + 2 H(+). Its function is as follows. Allows the formation of correctly charged Asn-tRNA(Asn) or Gln-tRNA(Gln) through the transamidation of misacylated Asp-tRNA(Asn) or Glu-tRNA(Gln) in organisms which lack either or both of asparaginyl-tRNA or glutaminyl-tRNA synthetases. The reaction takes place in the presence of glutamine and ATP through an activated phospho-Asp-tRNA(Asn) or phospho-Glu-tRNA(Gln). The chain is Glutamyl-tRNA(Gln) amidotransferase subunit C from Rickettsia conorii (strain ATCC VR-613 / Malish 7).